We begin with the raw amino-acid sequence, 119 residues long: Probable prefoldin subunit 6 (119 aa).

This sequence belongs to the prefoldin subunit beta family. As to quaternary structure, heterohexamer of two PFD-alpha type and four PFD-beta type subunits. May interact with MSP1.

In terms of biological role, binds specifically to cytosolic chaperonin (c-CPN) and transfers target proteins to it. Binds to nascent polypeptide chain and promotes folding in an environment in which there are many competing pathways for nonnative proteins. This is Probable prefoldin subunit 6 from Plasmodium falciparum (isolate 3D7).